The sequence spans 113 residues: Ig heavy chain V-III region E109 (113 aa).

The 113-residue stretch at 1–113 (EVKLEESGGG…YWGQGTLVTV (113 aa)) folds into the Ig-like domain. The cysteines at positions 22 and 98 are disulfide-linked.

In Mus musculus (Mouse), this protein is Ig heavy chain V-III region E109.